A 94-amino-acid polypeptide reads, in one-letter code: Large ribosomal subunit protein bL27 (94 aa).

Positions 1–9 (MLKLNLQFF) are excised as a propeptide. Residues 12-32 (KKGVSSTKNGRDSESKRLGAK) are disordered. Positions 20 to 32 (NGRDSESKRLGAK) are enriched in basic and acidic residues.

It belongs to the bacterial ribosomal protein bL27 family. Post-translationally, the N-terminus is cleaved by ribosomal processing cysteine protease Prp.

The protein is Large ribosomal subunit protein bL27 of Staphylococcus carnosus (strain TM300).